The primary structure comprises 105 residues: Heat shock protein HspQ (105 aa).

Residues 74 to 105 (SSETQDEHPEQPSMDELARTIRKQLQAPRLRN) are disordered.

Belongs to the HspQ family.

The protein resides in the cytoplasm. Its function is as follows. Involved in the degradation of certain denaturated proteins, including DnaA, during heat shock stress. The sequence is that of Heat shock protein HspQ from Citrobacter koseri (strain ATCC BAA-895 / CDC 4225-83 / SGSC4696).